A 52-amino-acid polypeptide reads, in one-letter code: Conotoxin Cal6.36 (52 aa).

The N-terminal stretch at 1–22 (MKVTCVLTLAVLILTVGQMVTA) is a signal peptide. Cystine bridges form between Cys-24/Cys-39, Cys-31/Cys-43, and Cys-38/Cys-47.

In terms of tissue distribution, expressed by the venom duct.

It is found in the secreted. In terms of biological role, probable neurotoxin. This Californiconus californicus (California cone) protein is Conotoxin Cal6.36.